The sequence spans 208 residues: Ras-related protein M-Ras (208 aa).

14 residues coordinate GTP: Asp-21, Gly-22, Gly-23, Val-24, Gly-25, Lys-26, Ser-27, Ala-28, Phe-38, Val-39, Pro-40, Tyr-42, Pro-44, and Thr-45. Ser-27 lines the Mg(2+) pocket. The Effector region motif lies at 42-50 (YDPTIEDSY). The Mg(2+) site is built by Thr-45 and Asp-67. GTP contacts are provided by Gly-70, Asn-126, Lys-127, Asp-129, Ser-156, Ala-157, and Lys-158. Cys-205 carries the cysteine methyl ester modification. Cys-205 carries S-geranylgeranyl cysteine lipidation. A propeptide spans 206-208 (VIL) (removed in mature form).

Belongs to the small GTPase superfamily. Ras family. Component of the SHOC2-MRAS-PP1c (SMP) holophosphatase complex consisting of SHOC2, GTP-bound M-Ras/MRAS and the catalytic subunit of protein phosphatase 1 (either PPP1CA, PPP1CB or PPP1CC). Interacts (active GTP-bound form) with both SHOC2 and PP1c (all isoforms) to form a tertiary complex; SHOC2 and PP1c preferably bind M-Ras/MRAS, but they also bind K-Ras/KRAS, N-Ras/NRAS and H-Ras/HRAS. Interacts with RGL3. Interacts (active GTP-bound form preferentially) with RGS14. Requires Mg(2+) as cofactor. As to expression, expressed in skeletal muscle cells.

The protein resides in the cell membrane. The catalysed reaction is GTP + H2O = GDP + phosphate + H(+). Its function is as follows. Signal transducer in the Ras-MAPK signaling pathway that regulates cell proliferation and survival. Core component of the SHOC2-MRAS-PP1c (SMP) holophosphatase complex that regulates the MAPK pathway activation. The formation of the SMP complex only occurs when MRAS is GTP-bound. MRAS has low intrinsic GTPase activity and may require additional factors for activation. The SMP complex specifically dephosphorylates the inhibitory phosphorylation at 'Ser-259' of RAF1 kinase, 'Ser-365' of BRAF kinase and 'Ser-214' of ARAF kinase, stimulating their kinase activities. This is Ras-related protein M-Ras (Mras) from Rattus norvegicus (Rat).